The following is a 232-amino-acid chain: Peptidyl-prolyl cis-trans isomerase FKBP18, chloroplastic (232 aa).

The region spanning 108-226 (GSTAQVHFDC…ELNIELLRVT (119 aa)) is the PPIase FKBP-type domain.

The protein belongs to the FKBP-type PPIase family.

It localises to the plastid. The protein localises to the chloroplast thylakoid lumen. The enzyme catalyses [protein]-peptidylproline (omega=180) = [protein]-peptidylproline (omega=0). In terms of biological role, PPIases accelerate the folding of proteins. It catalyzes the cis-trans isomerization of proline imidic peptide bonds in oligopeptides. The polypeptide is Peptidyl-prolyl cis-trans isomerase FKBP18, chloroplastic (FKBP18) (Arabidopsis thaliana (Mouse-ear cress)).